A 268-amino-acid polypeptide reads, in one-letter code: Imidazole glycerol phosphate synthase subunit HisF (268 aa).

Catalysis depends on residues Asp12 and Asp131.

It belongs to the HisA/HisF family. In terms of assembly, heterodimer of HisH and HisF.

Its subcellular location is the cytoplasm. It catalyses the reaction 5-[(5-phospho-1-deoxy-D-ribulos-1-ylimino)methylamino]-1-(5-phospho-beta-D-ribosyl)imidazole-4-carboxamide + L-glutamine = D-erythro-1-(imidazol-4-yl)glycerol 3-phosphate + 5-amino-1-(5-phospho-beta-D-ribosyl)imidazole-4-carboxamide + L-glutamate + H(+). The protein operates within amino-acid biosynthesis; L-histidine biosynthesis; L-histidine from 5-phospho-alpha-D-ribose 1-diphosphate: step 5/9. IGPS catalyzes the conversion of PRFAR and glutamine to IGP, AICAR and glutamate. The HisF subunit catalyzes the cyclization activity that produces IGP and AICAR from PRFAR using the ammonia provided by the HisH subunit. The protein is Imidazole glycerol phosphate synthase subunit HisF of Methanoregula boonei (strain DSM 21154 / JCM 14090 / 6A8).